The chain runs to 353 residues: Protein XRP2 (353 aa).

Residues 1–37 are disordered; the sequence is MGCFFSKKAKRKRNSEEEQPQQDGEEPKQYSWDKREK. The N-myristoyl glycine moiety is linked to residue Gly2. A lipid anchor (S-palmitoyl cysteine) is attached at Cys3. A compositionally biased stretch (basic and acidic residues) spans 25–37; that stretch reads EEPKQYSWDKREK. A C-CAP/cofactor C-like domain is found at 27–182; that stretch reads PKQYSWDKRE…TWSNIHDFTP (156 aa). GTP-binding positions include 101–102 and 118–121; these read GS and QQFR.

It belongs to the TBCC family. Myristoylated on Gly-2; which may be required for membrane targeting. In terms of processing, palmitoylated on Cys-3; which may be required for plasma membrane targeting.

The protein resides in the cell membrane. Acts as a GTPase-activating protein (GAP) for tubulin in concert with tubulin-specific chaperone C, but does not enhance tubulin heterodimerization. Acts as a GTPase-activating protein. May act as guanine nucleotide dissociation inhibitor towards ADP-ribosylation factor-like proteins. The protein is Protein XRP2 (rp2) of Xenopus laevis (African clawed frog).